Consider the following 190-residue polypeptide: Elongation factor P 2 (190 aa).

The protein belongs to the elongation factor P family.

Its subcellular location is the cytoplasm. It functions in the pathway protein biosynthesis; polypeptide chain elongation. Its function is as follows. Involved in peptide bond synthesis. Stimulates efficient translation and peptide-bond synthesis on native or reconstituted 70S ribosomes in vitro. Probably functions indirectly by altering the affinity of the ribosome for aminoacyl-tRNA, thus increasing their reactivity as acceptors for peptidyl transferase. This Chlamydia caviae (strain ATCC VR-813 / DSM 19441 / 03DC25 / GPIC) (Chlamydophila caviae) protein is Elongation factor P 2 (efp2).